Here is a 339-residue protein sequence, read N- to C-terminus: Ketol-acid reductoisomerase (NADP(+)) (339 aa).

The region spanning 1–182 is the KARI N-terminal Rossmann domain; that stretch reads MRVYYDRDAD…GGGRAGIIET (182 aa). NADP(+)-binding positions include 24-27, Arg48, Ser51, Ser53, and 83-86; these read YGSQ and DELQ. The active site involves His108. Gly134 lines the NADP(+) pocket. One can recognise a KARI C-terminal knotted domain in the interval 183–328; the sequence is TFKEECETDL…EKLREMMPWI (146 aa). Asp191, Glu195, Glu227, and Glu231 together coordinate Mg(2+). A substrate-binding site is contributed by Ser252.

It belongs to the ketol-acid reductoisomerase family. The cofactor is Mg(2+).

It carries out the reaction (2R)-2,3-dihydroxy-3-methylbutanoate + NADP(+) = (2S)-2-acetolactate + NADPH + H(+). The catalysed reaction is (2R,3R)-2,3-dihydroxy-3-methylpentanoate + NADP(+) = (S)-2-ethyl-2-hydroxy-3-oxobutanoate + NADPH + H(+). It participates in amino-acid biosynthesis; L-isoleucine biosynthesis; L-isoleucine from 2-oxobutanoate: step 2/4. Its pathway is amino-acid biosynthesis; L-valine biosynthesis; L-valine from pyruvate: step 2/4. In terms of biological role, involved in the biosynthesis of branched-chain amino acids (BCAA). Catalyzes an alkyl-migration followed by a ketol-acid reduction of (S)-2-acetolactate (S2AL) to yield (R)-2,3-dihydroxy-isovalerate. In the isomerase reaction, S2AL is rearranged via a Mg-dependent methyl migration to produce 3-hydroxy-3-methyl-2-ketobutyrate (HMKB). In the reductase reaction, this 2-ketoacid undergoes a metal-dependent reduction by NADPH to yield (R)-2,3-dihydroxy-isovalerate. The protein is Ketol-acid reductoisomerase (NADP(+)) of Azorhizobium caulinodans (strain ATCC 43989 / DSM 5975 / JCM 20966 / LMG 6465 / NBRC 14845 / NCIMB 13405 / ORS 571).